The following is a 415-amino-acid chain: Gamma-glutamyl phosphate reductase (415 aa).

Belongs to the gamma-glutamyl phosphate reductase family.

The protein localises to the cytoplasm. It catalyses the reaction L-glutamate 5-semialdehyde + phosphate + NADP(+) = L-glutamyl 5-phosphate + NADPH + H(+). Its pathway is amino-acid biosynthesis; L-proline biosynthesis; L-glutamate 5-semialdehyde from L-glutamate: step 2/2. Catalyzes the NADPH-dependent reduction of L-glutamate 5-phosphate into L-glutamate 5-semialdehyde and phosphate. The product spontaneously undergoes cyclization to form 1-pyrroline-5-carboxylate. This Psychromonas ingrahamii (strain DSM 17664 / CCUG 51855 / 37) protein is Gamma-glutamyl phosphate reductase.